A 233-amino-acid polypeptide reads, in one-letter code: Transcriptional regulatory protein NatR (233 aa).

The 115-residue stretch at 3-117 (KVGLVDDYRV…RLAASFDRYL (115 aa)) folds into the Response regulatory domain. Aspartate 54 carries the post-translational modification 4-aspartylphosphate. In terms of domain architecture, HTH LytTR-type spans 129–233 (ILIKQKSEMH…QLDYFQNYYF (105 aa)).

Post-translationally, phosphorylated by NatK.

It is found in the cytoplasm. Functionally, member of the two-component regulatory system NatK/NatR that positively regulates the expression of the natAB operon. Acts by binding directly to the promoter of natAB. The sequence is that of Transcriptional regulatory protein NatR from Bacillus subtilis (strain 168).